A 724-amino-acid chain; its full sequence is NAD(+) hydrolase SARM1 (724 aa).

A mitochondrion-targeting transit peptide spans 1–27 (MVLTLLLSAYKLCRFFAMSGPRPGAER). An ARM 1 repeat occupies 60–100 (EVQDALERALPELQQALSALKQAGGARAVGAGLAEVFQLVE). NAD(+)-binding positions include Trp103, Arg110, 149 to 157 (EQILVAENR), and 190 to 193 (HMFK). 7 ARM repeats span residues 114–153 (QGLC…QILV), 155–193 (ENRD…HMFK), 196–235 (EETC…NCAL), 237–280 (GGQA…LATN), 281–314 (KEVE…CLVD), 315–354 (ASDT…AEAA), and 359–402 (QGKT…EEVP). SAM domains follow at residues 412–476 (WKEA…LKTF) and 486–548 (NLAD…MLHS). Ser548 and Ser558 each carry phosphoserine. Positions 560-703 (DTPDVFISYR…KIIRFLQGRS (144 aa)) constitute a TIR domain. NAD(+) contacts are provided by residues 569–570 (RR) and Glu599. The active site involves Glu642. A disordered region spans residues 704 to 724 (SRDSSAGSDTSLEGAAPMGPT).

Belongs to the SARM1 family. Homooctamer; forms an octameric ring via SAM domains. Interacts with TICAM1/TRIF and thereby interferes with TICAM1/TRIF function. Interacts with MAPK10/JNK3 and SDC2 (via cytoplasmic domain). In terms of processing, phosphorylation at Ser-548 by JNK kinases (MAPK8, MAPK9 and /or MAPK10) enhance the NAD(+) hydrolase (NADase) activity. Phosphorylation at Ser-548 and subsequent activation takes place in response to oxidative stress conditions and inhibits mitochondrial respiration. In terms of tissue distribution, predominantly expressed in brain, kidney and liver. Expressed at lower level in placenta.

The protein resides in the cytoplasm. It is found in the cell projection. Its subcellular location is the axon. It localises to the dendrite. The protein localises to the synapse. The protein resides in the mitochondrion. The catalysed reaction is NAD(+) + H2O = ADP-D-ribose + nicotinamide + H(+). It catalyses the reaction NAD(+) = cyclic ADP-beta-D-ribose + nicotinamide + H(+). It carries out the reaction NADP(+) + H2O = ADP-D-ribose 2'-phosphate + nicotinamide + H(+). Its activity is regulated as follows. Autoinhibited: in the inactive state, the enzymatic TIR domain is held apart by the autoinhibiting ARM repeats. NAD(+)-binding to ARM repeats maintains an inactive state by promoting interaction between ARM repeats and the TIR domain, thereby facilitating inhibition of the enzymatic TIR domain. Following activation, possibly by nicotinamide mononucleotide (NMN), auto-inhibitory interactions are released, allowing self-association of the TIR domains and subsequent activation of the NAD(+) hydrolase (NADase) activity. Self-association of TIR domains is facilitated by the octamer of SAM domains. NAD(+) hydrolase activity is inhibited by nicotinamide. Specifically inhibited by berberine chloride and zinc chloride. Functionally, NAD(+) hydrolase, which plays a key role in axonal degeneration following injury by regulating NAD(+) metabolism. Acts as a negative regulator of MYD88- and TRIF-dependent toll-like receptor signaling pathway by promoting Wallerian degeneration, an injury-induced form of programmed subcellular death which involves degeneration of an axon distal to the injury site. Wallerian degeneration is triggered by NAD(+) depletion: in response to injury, SARM1 is activated and catalyzes cleavage of NAD(+) into ADP-D-ribose (ADPR), cyclic ADPR (cADPR) and nicotinamide; NAD(+) cleavage promoting cytoskeletal degradation and axon destruction. Also able to hydrolyze NADP(+), but not other NAD(+)-related molecules. Can activate neuronal cell death in response to stress. Regulates dendritic arborization through the MAPK4-JNK pathway. Involved in innate immune response: inhibits both TICAM1/TRIF- and MYD88-dependent activation of JUN/AP-1, TRIF-dependent activation of NF-kappa-B and IRF3, and the phosphorylation of MAPK14/p38. The sequence is that of NAD(+) hydrolase SARM1 from Homo sapiens (Human).